Here is an 81-residue protein sequence, read N- to C-terminus: Antimicrobial peptide D1 (81 aa).

The first 31 residues, 1-31 (MAKTVLGIHVTFLTLLFAVLLLNDVMYTPVE), serve as a signal peptide directing secretion. Cystine bridges form between cysteine 34-cysteine 81, cysteine 45-cysteine 66, cysteine 51-cysteine 75, and cysteine 55-cysteine 77.

In terms of biological role, antimicrobial peptide probably active against fungi like B.sorokiniana, F.oxysporum, F.graminearum, F.avenaceum, B.cinerea, P.beta, P.infestans and P.debaryanum. The polypeptide is Antimicrobial peptide D1 (Stellaria media (Common chickweed)).